A 436-amino-acid polypeptide reads, in one-letter code: Histidine--tRNA ligase (436 aa).

Belongs to the class-II aminoacyl-tRNA synthetase family. As to quaternary structure, homodimer.

The protein resides in the cytoplasm. It carries out the reaction tRNA(His) + L-histidine + ATP = L-histidyl-tRNA(His) + AMP + diphosphate + H(+). The protein is Histidine--tRNA ligase of Psychrobacter sp. (strain PRwf-1).